The primary structure comprises 470 residues: A-type ATP synthase subunit B (470 aa).

It belongs to the ATPase alpha/beta chains family. In terms of assembly, has multiple subunits with at least A(3), B(3), C, D, E, F, H, I and proteolipid K(x).

It localises to the cell membrane. Functionally, component of the A-type ATP synthase that produces ATP from ADP in the presence of a proton gradient across the membrane. The B chain is a regulatory subunit. This chain is A-type ATP synthase subunit B, found in Haloarcula marismortui (strain ATCC 43049 / DSM 3752 / JCM 8966 / VKM B-1809) (Halobacterium marismortui).